A 244-amino-acid chain; its full sequence is tRNA pseudouridine synthase A (244 aa).

The active-site Nucleophile is the Asp52. Position 110 (Tyr110) interacts with substrate.

The protein belongs to the tRNA pseudouridine synthase TruA family. In terms of assembly, homodimer.

It carries out the reaction uridine(38/39/40) in tRNA = pseudouridine(38/39/40) in tRNA. Its function is as follows. Formation of pseudouridine at positions 38, 39 and 40 in the anticodon stem and loop of transfer RNAs. The protein is tRNA pseudouridine synthase A of Caldicellulosiruptor saccharolyticus (strain ATCC 43494 / DSM 8903 / Tp8T 6331).